A 645-amino-acid polypeptide reads, in one-letter code: 1,4-alpha-glucan branching enzyme GlgB (645 aa).

Aspartate 309 serves as the catalytic Nucleophile. Catalysis depends on glutamate 352, which acts as the Proton donor. Residues valine 619–arginine 645 form a disordered region. Residues arginine 636–arginine 645 show a composition bias toward polar residues.

It belongs to the glycosyl hydrolase 13 family. GlgB subfamily. As to quaternary structure, monomer.

It carries out the reaction Transfers a segment of a (1-&gt;4)-alpha-D-glucan chain to a primary hydroxy group in a similar glucan chain.. The protein operates within glycan biosynthesis; glycogen biosynthesis. Catalyzes the formation of the alpha-1,6-glucosidic linkages in glycogen by scission of a 1,4-alpha-linked oligosaccharide from growing alpha-1,4-glucan chains and the subsequent attachment of the oligosaccharide to the alpha-1,6 position. The protein is 1,4-alpha-glucan branching enzyme GlgB of Bacillus cereus (strain B4264).